Reading from the N-terminus, the 181-residue chain is K99 fimbrial protein (181 aa).

The first 22 residues, 1 to 22, serve as a signal peptide directing secretion; it reads MKKTLLAIILGGMAFATTNASA. An intrachain disulfide couples cysteine 38 to cysteine 79.

This sequence belongs to the fimbrial protein family.

The protein localises to the fimbrium. Functionally, fimbriae (also called pili), polar filaments radiating from the surface of the bacterium to a length of 0.5-1.5 micrometers and numbering 100-300 per cell, enable bacteria to colonize the epithelium of specific host organs. Its function is as follows. FanC is the main component of the K99 fimbriae. The protein is K99 fimbrial protein (fanC) of Escherichia coli.